Consider the following 258-residue polypeptide: Venom plasminogen activator GPV-PA (258 aa).

Residues methionine 1–alanine 18 form the signal peptide. Residues glutamine 19–leucine 24 constitute a propeptide that is removed on maturation. Residues valine 25–alanine 249 form the Peptidase S1 domain. 6 cysteine pairs are disulfide-bonded: cysteine 31/cysteine 163, cysteine 50/cysteine 66, cysteine 98/cysteine 256, cysteine 142/cysteine 210, cysteine 174/cysteine 189, and cysteine 200/cysteine 225. An N-linked (GlcNAc...) asparagine glycan is attached at asparagine 44. Active-site charge relay system residues include histidine 65 and aspartate 110. Asparagine 121 and asparagine 185 each carry an N-linked (GlcNAc...) asparagine glycan. The active-site Charge relay system is the serine 204.

It belongs to the peptidase S1 family. Snake venom subfamily. In terms of assembly, monomer. Expressed by the venom gland.

It is found in the secreted. Functionally, snake venom serine protease that activates plasminogen. This Trimeresurus albolabris (White-lipped pit viper) protein is Venom plasminogen activator GPV-PA.